Reading from the N-terminus, the 290-residue chain is Dual-specificity RNA pseudouridine synthase RluF (290 aa).

The S4 RNA-binding domain occupies 7-72 (VRLNKYISES…EAEDLVLIAL (66 aa)). 2 interaction with RNA regions span residues 105–108 (RLDK) and 187–190 (RQIR). The active-site Nucleophile is the aspartate 107. Residues 241–290 (SEAKPKAKAKPKTAGIKRPVVKMEKTAEKGGRPASNGKRFTSPGRKKKGR) form a disordered region. The span at 261–271 (VKMEKTAEKGG) shows a compositional bias: basic and acidic residues.

This sequence belongs to the pseudouridine synthase RsuA family. Monomer.

The catalysed reaction is uridine(2604) in 23S rRNA = pseudouridine(2604) in 23S rRNA. It carries out the reaction uridine(35) in tRNA(Tyr) = pseudouridine(35) in tRNA(Tyr). In terms of biological role, dual specificity enzyme that catalyzes the synthesis of pseudouridine from uracil-2604 in 23S ribosomal RNA and from uracil-35 in the anticodon of tRNA(Tyr). This is Dual-specificity RNA pseudouridine synthase RluF (rluF) from Escherichia coli O157:H7.